Here is a 252-residue protein sequence, read N- to C-terminus: 2-succinyl-6-hydroxy-2,4-cyclohexadiene-1-carboxylate synthase (252 aa).

This sequence belongs to the AB hydrolase superfamily. MenH family. In terms of assembly, monomer.

The enzyme catalyses 5-enolpyruvoyl-6-hydroxy-2-succinyl-cyclohex-3-ene-1-carboxylate = (1R,6R)-6-hydroxy-2-succinyl-cyclohexa-2,4-diene-1-carboxylate + pyruvate. Its pathway is quinol/quinone metabolism; 1,4-dihydroxy-2-naphthoate biosynthesis; 1,4-dihydroxy-2-naphthoate from chorismate: step 3/7. It functions in the pathway quinol/quinone metabolism; menaquinone biosynthesis. Its function is as follows. Catalyzes a proton abstraction reaction that results in 2,5-elimination of pyruvate from 2-succinyl-5-enolpyruvyl-6-hydroxy-3-cyclohexene-1-carboxylate (SEPHCHC) and the formation of 2-succinyl-6-hydroxy-2,4-cyclohexadiene-1-carboxylate (SHCHC). The sequence is that of 2-succinyl-6-hydroxy-2,4-cyclohexadiene-1-carboxylate synthase from Shigella sonnei (strain Ss046).